A 58-amino-acid chain; its full sequence is UPF0339 protein Msl4696 (58 aa).

This sequence belongs to the UPF0339 family.

This Mesorhizobium japonicum (strain LMG 29417 / CECT 9101 / MAFF 303099) (Mesorhizobium loti (strain MAFF 303099)) protein is UPF0339 protein Msl4696.